We begin with the raw amino-acid sequence, 225 residues long: UPF0758 protein Bpet3149 (225 aa).

Residues 103 to 225 form the MPN domain; the sequence is AMSEPGSVKR…VVSMAELGLL (123 aa). Residues H174, H176, and D187 each coordinate Zn(2+). The JAMM motif signature appears at 174-187; the sequence is HNHPSGSAQPSQAD.

It belongs to the UPF0758 family.

The polypeptide is UPF0758 protein Bpet3149 (Bordetella petrii (strain ATCC BAA-461 / DSM 12804 / CCUG 43448)).